A 340-amino-acid polypeptide reads, in one-letter code: Photosystem II protein D1 (340 aa).

The next 3 membrane-spanning stretches (helical) occupy residues 25–42 (YIGW…LATV), 114–129 (HFFL…EWEF), and 138–152 (WIFV…AAAA). Position 114 (H114) interacts with chlorophyll a. W122 serves as a coordination point for pheophytin a. [CaMn4O5] cluster-binding residues include D166 and E185. A helical membrane pass occupies residues 193–214 (FHILGVAGVFGGSLFSAMHGSL). Position 194 (H194) interacts with chlorophyll a. Residues H211 and 260-261 (SF) each bind a quinone. H211 is a binding site for Fe cation. Fe cation is bound at residue H268. A helical transmembrane segment spans residues 270–284 (FLAAWPVIGIWITSL). Positions 328, 329, 338, and 340 each coordinate [CaMn4O5] cluster.

The protein belongs to the reaction center PufL/M/PsbA/D family. PSII is composed of 1 copy each of membrane proteins PsbA, PsbB, PsbC, PsbD, PsbE, PsbF, PsbH, PsbI, PsbJ, PsbK, PsbL, PsbM, PsbT, PsbX, PsbY, PsbZ, Psb30/Ycf12, at least 3 peripheral proteins of the oxygen-evolving complex and a large number of cofactors. It forms dimeric complexes. The D1/D2 heterodimer binds P680, chlorophylls that are the primary electron donor of PSII, and subsequent electron acceptors. It shares a non-heme iron and each subunit binds pheophytin, quinone, additional chlorophylls, carotenoids and lipids. D1 provides most of the ligands for the Mn4-Ca-O5 cluster of the oxygen-evolving complex (OEC). There is also a Cl(-1) ion associated with D1 and D2, which is required for oxygen evolution. The PSII complex binds additional chlorophylls, carotenoids and specific lipids. is required as a cofactor. Tyr-157 forms a radical intermediate that is referred to as redox-active TyrZ, YZ or Y-Z.

It is found in the plastid. The protein resides in the chloroplast thylakoid membrane. It catalyses the reaction 2 a plastoquinone + 4 hnu + 2 H2O = 2 a plastoquinol + O2. In terms of biological role, photosystem II (PSII) is a light-driven water:plastoquinone oxidoreductase that uses light energy to abstract electrons from H(2)O, generating O(2) and a proton gradient subsequently used for ATP formation. It consists of a core antenna complex that captures photons, and an electron transfer chain that converts photonic excitation into a charge separation. The D1/D2 (PsbA/PsbD) reaction center heterodimer binds P680, the primary electron donor of PSII as well as several subsequent electron acceptors. In Amphidinium carterae (Dinoflagellate), this protein is Photosystem II protein D1.